The chain runs to 548 residues: GLC7-interacting protein 2 (548 aa).

Residues 1–23 (MYIKAEQKPQQFERKNEKLDRNK) are compositionally biased toward basic and acidic residues. 2 disordered regions span residues 1–54 (MYIK…STEE) and 118–143 (VESL…STVP). Serine 51 is modified (phosphoserine). A Phosphothreonine modification is found at threonine 52. Phosphoserine is present on serine 155. The tract at residues 191–212 (RSKSLPTTPGIRSGNGVQARDG) is disordered. Serine 221 and serine 238 each carry phosphoserine. The interval 293 to 346 (FAHPAKISNPNNGKGTNNTKLRKSKRFQNLLKNRTDMPPSKSNKKFVNGGGAHE) is disordered. One can recognise a CBM21 domain in the interval 419 to 534 (HNGNDCNGVA…NNNGNNYKVD (116 aa)).

As to quaternary structure, interacts with phosphatase 1 (GLC7).

The protein is GLC7-interacting protein 2 (GIP2) of Saccharomyces cerevisiae (strain ATCC 204508 / S288c) (Baker's yeast).